The sequence spans 356 residues: Malate dehydrogenase, glyoxysomal (356 aa).

A glyoxysome-targeting transit peptide spans 1–36; that stretch reads MQPIPDVNQRIARISAHLHPPKYQMEESSVLRRANC. Residues 51–57 and Asp-77 contribute to the NAD(+) site; that span reads GAAGGIG. Residues Arg-124 and Arg-130 each coordinate substrate. NAD(+) is bound by residues Asn-137 and 160 to 162; that span reads ISN. Asn-162 and Arg-196 together coordinate substrate. The active-site Proton acceptor is the His-220. An NAD(+)-binding site is contributed by Met-271.

It belongs to the LDH/MDH superfamily. MDH type 1 family. In terms of assembly, homodimer.

It is found in the glyoxysome. The catalysed reaction is (S)-malate + NAD(+) = oxaloacetate + NADH + H(+). The protein is Malate dehydrogenase, glyoxysomal (MDHG) of Cucumis sativus (Cucumber).